Reading from the N-terminus, the 78-residue chain is Mandibular organ-inhibiting hormone 2 (78 aa).

Intrachain disulfides connect Cys7/Cys44, Cys24/Cys40, and Cys27/Cys53.

The protein belongs to the arthropod CHH/MIH/GIH/VIH hormone family. In terms of tissue distribution, produced by the medulla terminalis X-organ in the eyestalks and transported to the sinus gland where it is stored and released.

It is found in the secreted. Functionally, represses the synthesis of methyl farnesoate, the precursor of insect juvenile hormone III in the mandibular organ. This chain is Mandibular organ-inhibiting hormone 2, found in Cancer pagurus (Rock crab).